We begin with the raw amino-acid sequence, 810 residues long: Glycerol-3-phosphate acyltransferase (810 aa).

Positions 305–310 match the HXXXXD motif motif; it reads CHRSHI.

This sequence belongs to the GPAT/DAPAT family.

The protein resides in the cell inner membrane. The catalysed reaction is sn-glycerol 3-phosphate + an acyl-CoA = a 1-acyl-sn-glycero-3-phosphate + CoA. It participates in phospholipid metabolism; CDP-diacylglycerol biosynthesis; CDP-diacylglycerol from sn-glycerol 3-phosphate: step 1/3. The chain is Glycerol-3-phosphate acyltransferase from Haemophilus influenzae (strain PittEE).